A 197-amino-acid chain; its full sequence is dITP/XTP pyrophosphatase (197 aa).

Residue 8 to 13 participates in substrate binding; the sequence is TGNPGK. Positions 40 and 69 each coordinate Mg(2+). The active-site Proton acceptor is the D69. Substrate is bound by residues S70, 154–157, K177, and 182–183; these read FGYD and HR.

It belongs to the HAM1 NTPase family. In terms of assembly, homodimer. The cofactor is Mg(2+).

It catalyses the reaction XTP + H2O = XMP + diphosphate + H(+). The enzyme catalyses dITP + H2O = dIMP + diphosphate + H(+). It carries out the reaction ITP + H2O = IMP + diphosphate + H(+). Pyrophosphatase that catalyzes the hydrolysis of nucleoside triphosphates to their monophosphate derivatives, with a high preference for the non-canonical purine nucleotides XTP (xanthosine triphosphate), dITP (deoxyinosine triphosphate) and ITP. Seems to function as a house-cleaning enzyme that removes non-canonical purine nucleotides from the nucleotide pool, thus preventing their incorporation into DNA/RNA and avoiding chromosomal lesions. The chain is dITP/XTP pyrophosphatase from Pectobacterium atrosepticum (strain SCRI 1043 / ATCC BAA-672) (Erwinia carotovora subsp. atroseptica).